Here is a 718-residue protein sequence, read N- to C-terminus: Threonine--tRNA ligase, mitochondrial (718 aa).

A Phosphoserine modification is found at S52. The TGS domain maps to 55 to 121 (QKEPRTIKIS…ETDSDLRFLT (67 aa)).

Belongs to the class-II aminoacyl-tRNA synthetase family. As to quaternary structure, homodimer.

It localises to the mitochondrion matrix. It catalyses the reaction tRNA(Thr) + L-threonine + ATP = L-threonyl-tRNA(Thr) + AMP + diphosphate + H(+). In terms of biological role, catalyzes the attachment of threonine to tRNA(Thr) in a two-step reaction: threonine is first activated by ATP to form Thr-AMP and then transferred to the acceptor end of tRNA(Thr). Also edits incorrectly charged tRNA(Thr) via its editing domain. In Homo sapiens (Human), this protein is Threonine--tRNA ligase, mitochondrial (TARS2).